The chain runs to 562 residues: Protein FAM222B (562 aa).

Composition is skewed to low complexity over residues 155–167 and 183–201; these read QQAL…LAHA and ALSH…HPQP. Disordered stretches follow at residues 155–203, 219–245, and 537–562; these read QQAL…QPMA, LQHP…VTVS, and AHRA…PGYR.

This sequence belongs to the FAM222 family.

In Homo sapiens (Human), this protein is Protein FAM222B (FAM222B).